The chain runs to 79 residues: FPIPLPFCWLCRTLIKRIQAVVPKGVLLKAVAQVCHVVPLPVGGICQCLAERYIVICLNMLLDRTLPQLVCGLVLRCSS.

A Saposin B-type domain is found at Pro-4–Ser-79. Cystine bridges form between Cys-8/Cys-77, Cys-11/Cys-71, and Cys-35/Cys-46.

As to quaternary structure, homodimer; disulfide-linked.

Its subcellular location is the secreted. The protein resides in the extracellular space. It is found in the surface film. In terms of biological role, pulmonary surfactant-associated proteins promote alveolar stability by lowering the surface tension at the air-liquid interface in the peripheral air spaces. SP-B increases the collapse pressure of palmitic acid to nearly 70 millinewtons per meter. This chain is Pulmonary surfactant-associated protein B (SFTPB), found in Sus scrofa (Pig).